We begin with the raw amino-acid sequence, 252 residues long: Probable transcriptional regulatory protein DSY2470 (252 aa).

Belongs to the TACO1 family.

It is found in the cytoplasm. This Desulfitobacterium hafniense (strain Y51) protein is Probable transcriptional regulatory protein DSY2470.